Here is a 125-residue protein sequence, read N- to C-terminus: Glycine cleavage system H protein (125 aa).

A Lipoyl-binding domain is found at 19-101 (VAVVGISDYA…EGKGWFMKLK (83 aa)). Lys60 is subject to N6-lipoyllysine.

It belongs to the GcvH family. In terms of assembly, the glycine cleavage system is composed of four proteins: P, T, L and H. Requires (R)-lipoate as cofactor.

Functionally, the glycine cleavage system catalyzes the degradation of glycine. The H protein shuttles the methylamine group of glycine from the P protein to the T protein. This chain is Glycine cleavage system H protein, found in Xanthobacter autotrophicus (strain ATCC BAA-1158 / Py2).